Here is a 53-residue protein sequence, read N- to C-terminus: Neuronal protein NP-190 (53 aa).

Mainly expressed in the fetal brain where it is specifically localized to the proximal axonal segments, cell bodies and growth cones. Lower level of expression was also detected in the fetal heart and the skeletal muscle. No expression in kidney, liver, lung or spleen.

It is found in the membrane. Neuronal antigen that may play a role in brain development. May be involved in neurite formation or axonal guidance. The polypeptide is Neuronal protein NP-190 (Sus scrofa (Pig)).